A 542-amino-acid polypeptide reads, in one-letter code: CTP synthase (542 aa).

The amidoligase domain stretch occupies residues 1 to 265 (MARYVFITGG…DNEVLAAFGI (265 aa)). Ser13 is a CTP binding site. Residue Ser13 coordinates UTP. ATP is bound by residues 14–19 (SLGKGI) and Asp71. Mg(2+)-binding residues include Asp71 and Glu139. CTP contacts are provided by residues 146–148 (DIE), 186–191 (KTKPTQ), and Lys222. UTP-binding positions include 186–191 (KTKPTQ) and Lys222. Positions 291 to 541 (TIAIVGKYTG…IEAALEQSRL (251 aa)) constitute a Glutamine amidotransferase type-1 domain. An L-glutamine-binding site is contributed by Gly353. Residue Cys380 is the Nucleophile; for glutamine hydrolysis of the active site. L-glutamine-binding positions include 381–384 (FGMQ), Glu404, and Arg469. Catalysis depends on residues His514 and Glu516.

The protein belongs to the CTP synthase family. Homotetramer.

The catalysed reaction is UTP + L-glutamine + ATP + H2O = CTP + L-glutamate + ADP + phosphate + 2 H(+). It catalyses the reaction L-glutamine + H2O = L-glutamate + NH4(+). It carries out the reaction UTP + NH4(+) + ATP = CTP + ADP + phosphate + 2 H(+). The protein operates within pyrimidine metabolism; CTP biosynthesis via de novo pathway; CTP from UDP: step 2/2. Its activity is regulated as follows. Allosterically activated by GTP, when glutamine is the substrate; GTP has no effect on the reaction when ammonia is the substrate. The allosteric effector GTP functions by stabilizing the protein conformation that binds the tetrahedral intermediate(s) formed during glutamine hydrolysis. Inhibited by the product CTP, via allosteric rather than competitive inhibition. Functionally, catalyzes the ATP-dependent amination of UTP to CTP with either L-glutamine or ammonia as the source of nitrogen. Regulates intracellular CTP levels through interactions with the four ribonucleotide triphosphates. This chain is CTP synthase, found in Rhizobium meliloti (strain 1021) (Ensifer meliloti).